The following is a 370-amino-acid chain: NADH-quinone oxidoreductase subunit D (370 aa).

This sequence belongs to the complex I 49 kDa subunit family. In terms of assembly, NDH-1 is composed of 14 different subunits. Subunits NuoB, C, D, E, F, and G constitute the peripheral sector of the complex.

It is found in the cell membrane. The catalysed reaction is a quinone + NADH + 5 H(+)(in) = a quinol + NAD(+) + 4 H(+)(out). Functionally, NDH-1 shuttles electrons from NADH, via FMN and iron-sulfur (Fe-S) centers, to quinones in the respiratory chain. The immediate electron acceptor for the enzyme in this species is believed to be a menaquinone. Couples the redox reaction to proton translocation (for every two electrons transferred, four hydrogen ions are translocated across the cytoplasmic membrane), and thus conserves the redox energy in a proton gradient. This Clostridium beijerinckii (strain ATCC 51743 / NCIMB 8052) (Clostridium acetobutylicum) protein is NADH-quinone oxidoreductase subunit D.